A 205-amino-acid chain; its full sequence is Large ribosomal subunit protein uL4 (205 aa).

Residues 56 to 78 are disordered; that stretch reads VSGTTAKPYRQKHTGRARQGSLR.

It belongs to the universal ribosomal protein uL4 family. As to quaternary structure, part of the 50S ribosomal subunit.

In terms of biological role, one of the primary rRNA binding proteins, this protein initially binds near the 5'-end of the 23S rRNA. It is important during the early stages of 50S assembly. It makes multiple contacts with different domains of the 23S rRNA in the assembled 50S subunit and ribosome. Functionally, forms part of the polypeptide exit tunnel. The polypeptide is Large ribosomal subunit protein uL4 (Ehrlichia ruminantium (strain Gardel)).